The following is a 141-amino-acid chain: Hemoglobin subunit alpha (141 aa).

In terms of domain architecture, Globin spans 1-141 (VLSAEDKANV…VSTVLTSKYR (141 aa)). S3 carries the post-translational modification Phosphoserine. N6-succinyllysine is present on residues K7 and K11. Residue K16 is modified to N6-acetyllysine; alternate. At K16 the chain carries N6-succinyllysine; alternate. Y24 is subject to Phosphotyrosine. S35 carries the phosphoserine modification. K40 bears the N6-succinyllysine mark. A Phosphoserine modification is found at S49. H58 lines the O2 pocket. H87 lines the heme b pocket. Residue S102 is modified to Phosphoserine. T108 is subject to Phosphothreonine. Residues S124 and S131 each carry the phosphoserine modification. T134 and T137 each carry phosphothreonine. A Phosphoserine modification is found at S138.

Belongs to the globin family. As to quaternary structure, heterotetramer of two alpha chains and two beta chains. Red blood cells.

Its function is as follows. Involved in oxygen transport from the lung to the various peripheral tissues. This chain is Hemoglobin subunit alpha, found in Peromyscus crinitus (Canyon mouse).